The following is a 276-amino-acid chain: Aquaporin-6 (276 aa).

The Cytoplasmic portion of the chain corresponds to 1–22 (MEPGLCNRAYLLVGGLWTAISK). The chain crosses the membrane as a helical span at residues 23–43 (ALFAEFLATGLYVFFGVGSVL). Topologically, residues 44 to 51 (PWPVALPS) are extracellular. Residues 52-70 (VLQVAITFNLATATAVQIS) traverse the membrane as a helical segment. Over 71–75 (WKTSG) the chain is Cytoplasmic. The discontinuously helical intramembrane region spans 76 to 85 (AHANPAVTLA). Residues 79-81 (NPA) carry the NPA 1 motif. Residues 86 to 96 (YLVGSHISLPR) are Cytoplasmic-facing. A helical transmembrane segment spans residues 97 to 118 (AVAYIAAQLAGATVGAALLYGV). Residues 119-138 (TPGGVRETLGVNVVHNSTST) are Extracellular-facing. Asn-134 is a glycosylation site (N-linked (GlcNAc...) asparagine). A helical membrane pass occupies residues 139 to 159 (GQAVAVELVLTLQLVLCVFAS). At 160–165 (MDSRQT) the chain is on the cytoplasmic side. Residues 166-185 (LGSPAAMIGTSVALGHLIGI) traverse the membrane as a helical segment. The Extracellular segment spans residues 186–189 (YFTG). Positions 190–202 (CSMNPARSFGPAV) form an intramembrane region, discontinuously helical. Residues 193–195 (NPA) carry the NPA 2 motif. Residues 203–210 (IVGKFAVH) are Extracellular-facing. A helical transmembrane segment spans residues 211–231 (WIFWVGPLTGAVLASLIYNFI). Residues 232–276 (LFPDTKTVAQRLAILVGTTKVEKVVDLEPQKKESQTNSEDTEVSV) lie on the Cytoplasmic side of the membrane.

Belongs to the MIP/aquaporin (TC 1.A.8) family. Homotetramer; each monomer provides an independent solute pore. Post-translationally, N-glycosylated. Kidney.

Its subcellular location is the cytoplasmic vesicle membrane. The enzyme catalyses nitrate(in) = nitrate(out). The catalysed reaction is iodide(out) = iodide(in). It catalyses the reaction bromide(in) = bromide(out). It carries out the reaction chloride(in) = chloride(out). The enzyme catalyses Na(+)(in) = Na(+)(out). The catalysed reaction is H2O(in) = H2O(out). It catalyses the reaction CO2(out) = CO2(in). It carries out the reaction NH4(+)(in) = NH4(+)(out). Its activity is regulated as follows. Activated by mercury and pH-gated, anion permeability is observed at pH 5.5 and increases markedly at pH 4.0. Selectivity for chloride increases at low pH. The water channel activity is stimulated by mercury by opposition to other aquaporins. Functionally, aquaporins form homotetrameric transmembrane channels, with each monomer independently mediating water transport across the plasma membrane along its osmotic gradient. Unlike classical aquaporins, AQP6 is an intracellular channel with selective anion permeability, particularly for nitrate, and exhibits very low water permeability. It may also facilitate the transport of gases, such as CO2 and NH4(+), as demonstrated in vitro. The sequence is that of Aquaporin-6 from Rattus norvegicus (Rat).